The chain runs to 233 residues: 5'-methylthioadenosine/S-adenosylhomocysteine nucleosidase (233 aa).

The active-site Proton acceptor is Glu12. Residues Gly78, Ile156, and 177–178 (ME) contribute to the substrate site. Residue Asp201 is the Proton donor of the active site.

The protein belongs to the PNP/UDP phosphorylase family. MtnN subfamily.

It catalyses the reaction S-adenosyl-L-homocysteine + H2O = S-(5-deoxy-D-ribos-5-yl)-L-homocysteine + adenine. It carries out the reaction S-methyl-5'-thioadenosine + H2O = 5-(methylsulfanyl)-D-ribose + adenine. The enzyme catalyses 5'-deoxyadenosine + H2O = 5-deoxy-D-ribose + adenine. It participates in amino-acid biosynthesis; L-methionine biosynthesis via salvage pathway; S-methyl-5-thio-alpha-D-ribose 1-phosphate from S-methyl-5'-thioadenosine (hydrolase route): step 1/2. Its function is as follows. Catalyzes the irreversible cleavage of the glycosidic bond in both 5'-methylthioadenosine (MTA) and S-adenosylhomocysteine (SAH/AdoHcy) to adenine and the corresponding thioribose, 5'-methylthioribose and S-ribosylhomocysteine, respectively. Also cleaves 5'-deoxyadenosine, a toxic by-product of radical S-adenosylmethionine (SAM) enzymes, into 5-deoxyribose and adenine. The sequence is that of 5'-methylthioadenosine/S-adenosylhomocysteine nucleosidase from Listeria innocua serovar 6a (strain ATCC BAA-680 / CLIP 11262).